We begin with the raw amino-acid sequence, 117 residues long: MIYGIGIDITNIDRFKALHNPTSFIKKVLTDKEQAELAGKSGQRAYEFLAGHFSVKESYSKAYGTGLGKKLNFQDIEVEYDDNGRPVISNHPFAGVAHVSISHSKHHVVTQVILEGD.

Mg(2+) contacts are provided by Asp-8 and Glu-57.

Belongs to the P-Pant transferase superfamily. AcpS family. It depends on Mg(2+) as a cofactor.

It localises to the cytoplasm. The catalysed reaction is apo-[ACP] + CoA = holo-[ACP] + adenosine 3',5'-bisphosphate + H(+). Functionally, transfers the 4'-phosphopantetheine moiety from coenzyme A to a Ser of acyl-carrier-protein. The sequence is that of Holo-[acyl-carrier-protein] synthase from Limosilactobacillus reuteri (Lactobacillus reuteri).